A 192-amino-acid polypeptide reads, in one-letter code: MAREPREGGRGGRDREREGDDLVDKLVTINRVAKVVKGGRRFAFAALVVVGDQKGRVGYGAGKAREVPEAIRKATDRAKRAMIRVPMKEGRTLHHDVAGHFGAGKVVLRSADAGTGIIAGGPMRAVFESLGINDVVAKSLGTRNPHNMVKATFAALERCASPRTVANRRGKKVSDILGRRDVAGTGEAAADV.

An S5 DRBM domain is found at 22 to 85 (LVDKLVTINR…DRAKRAMIRV (64 aa)).

The protein belongs to the universal ribosomal protein uS5 family. In terms of assembly, part of the 30S ribosomal subunit. Contacts proteins S4 and S8.

Functionally, with S4 and S12 plays an important role in translational accuracy. In terms of biological role, located at the back of the 30S subunit body where it stabilizes the conformation of the head with respect to the body. The polypeptide is Small ribosomal subunit protein uS5 (Gluconacetobacter diazotrophicus (strain ATCC 49037 / DSM 5601 / CCUG 37298 / CIP 103539 / LMG 7603 / PAl5)).